Consider the following 1377-residue polypeptide: Endoribonuclease Dicer homolog 2b (1377 aa).

Over residues 1–15 (MGGPLTAAGGRGDGG) the composition is skewed to gly residues. The segment at 1–30 (MGGPLTAAGGRGDGGAKAVEPLRPPPPPDP) is disordered. The Helicase ATP-binding domain occupies 41 to 222 (ALERAVRGNT…HNYSKQISEI (182 aa)). 54–61 (LETGSGKT) lines the ATP pocket. The DECH box motif lies at 163-166 (DECH). Residues 388–561 (TLLQYRHMQD…DTYYRVESTP (174 aa)) enclose the Helicase C-terminal domain. In terms of domain architecture, Dicer dsRNA-binding fold spans 534 to 626 (SLRLGSISCQ…LPELDVPCDE (93 aa)). The 116-residue stretch at 798 to 913 (RDIDLLQTKD…LPPELCRIIM (116 aa)) folds into the PAZ domain. 2 RNase III domains span residues 940 to 1095 (SVKL…STAG) and 1132 to 1276 (VRSL…LDSK). 3 residues coordinate Mg(2+): Glu1171, Asp1262, and Glu1265. Residues 1302-1367 (DPVKGLQEFC…SKAVLKDLIA (66 aa)) form the DRBM domain.

Belongs to the helicase family. Dicer subfamily. May interact with ARGONAUTE1 or PINHEAD through their common PAZ domains. Requires Mg(2+) as cofactor. The cofactor is Mn(2+).

It localises to the nucleus. In terms of biological role, probably involved in the RNA silencing pathway. May cleave double-stranded RNA to produce short 21-24 nucleotides (nt) RNAs which target the selective destruction of complementary RNAs. This is Endoribonuclease Dicer homolog 2b (DCL2B) from Oryza sativa subsp. japonica (Rice).